We begin with the raw amino-acid sequence, 190 residues long: Glutathione peroxidase 2 (190 aa).

U40 is an active-site residue. Position 40 (U40) is a non-standard amino acid, selenocysteine.

Belongs to the glutathione peroxidase family. Homotetramer. Exclusively expressed in the stomach and small intestine.

It localises to the cytoplasm. The protein localises to the cytosol. The catalysed reaction is 2 glutathione + H2O2 = glutathione disulfide + 2 H2O. It carries out the reaction a hydroperoxy polyunsaturated fatty acid + 2 glutathione = a hydroxy polyunsaturated fatty acid + glutathione disulfide + H2O. The enzyme catalyses tert-butyl hydroperoxide + 2 glutathione = tert-butanol + glutathione disulfide + H2O. It catalyses the reaction cumene hydroperoxide + 2 glutathione = 2-phenylpropan-2-ol + glutathione disulfide + H2O. The catalysed reaction is (13S)-hydroperoxy-(9Z,11E)-octadecadienoate + 2 glutathione = (13S)-hydroxy-(9Z,11E)-octadecadienoate + glutathione disulfide + H2O. It carries out the reaction (5S)-hydroperoxy-(6E,8Z,11Z,14Z)-eicosatetraenoate + 2 glutathione = (5S)-hydroxy-(6E,8Z,11Z,14Z)-eicosatetraenoate + glutathione disulfide + H2O. The enzyme catalyses (12R)-hydroperoxy-(5Z,8Z,10E,14Z)-eicosatetraenoate + 2 glutathione = (12R)-hydroxy-(5Z,8Z,10E,14Z)-eicosatetraenoate + glutathione disulfide + H2O. It catalyses the reaction (15S)-hydroperoxy-(5Z,8Z,11Z,13E)-eicosatetraenoate + 2 glutathione = (15S)-hydroxy-(5Z,8Z,11Z,13E)-eicosatetraenoate + glutathione disulfide + H2O. Catalyzes the reduction of hydroperoxides in a glutathione-dependent manner thus regulating cellular redox homeostasis. Can reduce small soluble hydroperoxides such as H2O2, cumene hydroperoxide and tert-butyl hydroperoxide, as well as several fatty acid-derived hydroperoxides. Cannot reduce phosphatidycholine hydroperoxide. The polypeptide is Glutathione peroxidase 2 (GPX2) (Macaca fuscata fuscata (Japanese macaque)).